Reading from the N-terminus, the 472-residue chain is GTPase Der (472 aa).

2 EngA-type G domains span residues 3–166 (PVIA…PEQE) and 176–349 (IRIG…DSAM). GTP contacts are provided by residues 9 to 16 (GRPNVGKS), 56 to 60 (DTGGI), 118 to 121 (NKID), 182 to 189 (GRPNVGKS), 229 to 233 (DTAGV), and 294 to 297 (NKWD). Positions 350–434 (AKWSTNQLTT…PIRFEFRSGE (85 aa)) constitute a KH-like domain. The disordered stretch occupies residues 433–472 (GENPFAGKKNKLSPRQQKKKERLMKHVKKLKHKQKRKKSR). The span at 440 to 472 (KKNKLSPRQQKKKERLMKHVKKLKHKQKRKKSR) shows a compositional bias: basic residues.

It belongs to the TRAFAC class TrmE-Era-EngA-EngB-Septin-like GTPase superfamily. EngA (Der) GTPase family. Associates with the 50S ribosomal subunit.

GTPase that plays an essential role in the late steps of ribosome biogenesis. In Hahella chejuensis (strain KCTC 2396), this protein is GTPase Der.